The following is a 950-amino-acid chain: Leucine--tRNA ligase (950 aa).

A 'HIGH' region motif is present at residues 72-83 (PYPSGEGLHVGH). Residues 722-726 (KIGKS) carry the 'KMSKS' region motif. ATP is bound at residue lysine 725.

This sequence belongs to the class-I aminoacyl-tRNA synthetase family.

Its subcellular location is the cytoplasm. It carries out the reaction tRNA(Leu) + L-leucine + ATP = L-leucyl-tRNA(Leu) + AMP + diphosphate. The chain is Leucine--tRNA ligase from Mycobacterium sp. (strain KMS).